A 373-amino-acid chain; its full sequence is tRNA/tmRNA (uracil-C(5))-methyltransferase (373 aa).

Positions 190, 219, 224, 240, and 300 each coordinate S-adenosyl-L-methionine. The active-site Nucleophile is the Cys325. Glu359 acts as the Proton acceptor in catalysis.

It belongs to the class I-like SAM-binding methyltransferase superfamily. RNA M5U methyltransferase family. TrmA subfamily.

It catalyses the reaction uridine(54) in tRNA + S-adenosyl-L-methionine = 5-methyluridine(54) in tRNA + S-adenosyl-L-homocysteine + H(+). The catalysed reaction is uridine(341) in tmRNA + S-adenosyl-L-methionine = 5-methyluridine(341) in tmRNA + S-adenosyl-L-homocysteine + H(+). In terms of biological role, dual-specificity methyltransferase that catalyzes the formation of 5-methyluridine at position 54 (m5U54) in all tRNAs, and that of position 341 (m5U341) in tmRNA (transfer-mRNA). The protein is tRNA/tmRNA (uracil-C(5))-methyltransferase of Chromohalobacter salexigens (strain ATCC BAA-138 / DSM 3043 / CIP 106854 / NCIMB 13768 / 1H11).